Consider the following 800-residue polypeptide: Metabotropic glutamate receptor-like protein C (800 aa).

The signal sequence occupies residues 1–21; the sequence is MKMKIIFLILILIFSINIIKC. Topologically, residues 22–392 are extracellular; sequence DKEFKMLTLL…EVEFSQSLQY (371 aa). N-linked (GlcNAc...) asparagine glycosylation is found at Asn-69, Asn-107, Asn-166, Asn-258, Asn-276, Asn-302, and Asn-345. Residues 393–413 form a helical membrane-spanning segment; the sequence is GFSITTGVLIAITIIMMLGIV. The Cytoplasmic segment spans residues 414–426; that stretch reads RYKSTPSIRSASP. Residues 427 to 447 traverse the membrane as a helical segment; that stretch reads IFLNFILAGGIIVYIGIIVWV. Over 448–463 the chain is Extracellular; the sequence is GPANDHQCNARLWLVT. The helical transmembrane segment at 464–484 threads the bilayer; it reads LGFSTLIGSLVVKNFRIWLIF. At 485–499 the chain is on the cytoplasmic side; the sequence is DNPELKSISITNYQL. The helical transmembrane segment at 500-520 threads the bilayer; sequence FPWVGACLVINIILMSILTSV. Residues 521–551 are Extracellular-facing; it reads GDLREIDAQGIDSLGKYEFMKVCKMNSSGAS. An N-linked (GlcNAc...) asparagine glycan is attached at Asn-546. A helical membrane pass occupies residues 552–572; it reads TLYTILAYFAALLLVGVFVSW. The Cytoplasmic segment spans residues 573-586; it reads KIRIVDIQEFNESK. Residues 587–607 form a helical membrane-spanning segment; sequence AIANTLYAISFCLFVIVPLMI. At 608–616 the chain is on the extracellular side; sequence SPQDKQSET. A helical transmembrane segment spans residues 617–637; sequence IVLCTAGLFITTAALLIIFTP. At 638–800 the chain is on the cytoplasmic side; it reads KFWRVFTLGD…NDTEEEDKNQ (163 aa). Disordered regions lie at residues 658 to 694 and 718 to 800; these read QSNVATARAESSKSSSGPKLNRRGNLVSDDFTDTETS and EFDD…DKNQ. Acidic residues predominate over residues 718–732; that stretch reads EFDDNNIEQDNDNDN. The span at 733-774 shows a compositional bias: low complexity; the sequence is DNNNNNNNNNNNNNNNNNNNNNNNNNNNNNNNNNNNNNNNNN. The span at 781–791 shows a compositional bias: basic and acidic residues; that stretch reads NDEKVEEKQQN.

In the N-terminal section; belongs to the BMP lipoprotein family. This sequence in the C-terminal section; belongs to the G-protein coupled receptor 3 family. GABA-B receptor subfamily.

The protein resides in the membrane. This is Metabotropic glutamate receptor-like protein C (grlC) from Dictyostelium discoideum (Social amoeba).